We begin with the raw amino-acid sequence, 188 residues long: dITP/XTP pyrophosphatase (188 aa).

A substrate-binding site is contributed by 7 to 12 (TGNIGK). The Mg(2+) site is built by Glu-36 and Asp-65. Asp-65 acts as the Proton acceptor in catalysis. Residues Ser-66, 141–144 (FGYD), Lys-164, and 169–170 (HR) contribute to the substrate site.

This sequence belongs to the HAM1 NTPase family. As to quaternary structure, homodimer. Requires Mg(2+) as cofactor.

It catalyses the reaction XTP + H2O = XMP + diphosphate + H(+). It carries out the reaction dITP + H2O = dIMP + diphosphate + H(+). The enzyme catalyses ITP + H2O = IMP + diphosphate + H(+). Pyrophosphatase that catalyzes the hydrolysis of nucleoside triphosphates to their monophosphate derivatives, with a high preference for the non-canonical purine nucleotides XTP (xanthosine triphosphate), dITP (deoxyinosine triphosphate) and ITP. Seems to function as a house-cleaning enzyme that removes non-canonical purine nucleotides from the nucleotide pool, thus preventing their incorporation into DNA/RNA and avoiding chromosomal lesions. This Methanopyrus kandleri (strain AV19 / DSM 6324 / JCM 9639 / NBRC 100938) protein is dITP/XTP pyrophosphatase.